A 286-amino-acid polypeptide reads, in one-letter code: tRNA dimethylallyltransferase (286 aa).

Residues 18–21 are interaction with substrate tRNA; the sequence is DSMQ.

This sequence belongs to the IPP transferase family. Monomer. Requires Mg(2+) as cofactor.

It carries out the reaction adenosine(37) in tRNA + dimethylallyl diphosphate = N(6)-dimethylallyladenosine(37) in tRNA + diphosphate. Catalyzes the transfer of a dimethylallyl group onto the adenine at position 37 in tRNAs that read codons beginning with uridine, leading to the formation of N6-(dimethylallyl)adenosine (i(6)A). This Tropheryma whipplei (strain TW08/27) (Whipple's bacillus) protein is tRNA dimethylallyltransferase.